Reading from the N-terminus, the 144-residue chain is Cytochrome c oxidase subunit 4 isoform 1, mitochondrial (144 aa).

Over 1–73 the chain is Mitochondrial matrix; the sequence is SVVKSEDFSL…SFAEMNRGSN (73 aa). Position 4 is an N6-acetyllysine; alternate (K4). K4 carries the post-translational modification N6-succinyllysine; alternate. K28 is modified (N6-acetyllysine). Phosphoserine occurs at positions 31 and 33. An N6-acetyllysine; alternate modification is found at K35. An N6-succinyllysine; alternate modification is found at K35. K42 is subject to N6-acetyllysine. The helical transmembrane segment at 74-99 threads the bilayer; the sequence is EWKTVVGGAMFFIGFTALIIMWQKRH. Over 100–144 the chain is Mitochondrial intermembrane; that stretch reads VYGPLPQSFDKEWVAKQTKRMLDMKVNPIQGLASKWDYEKNEWKK.

Belongs to the cytochrome c oxidase IV family. In terms of assembly, component of the cytochrome c oxidase (complex IV, CIV), a multisubunit enzyme composed of 14 subunits. The complex is composed of a catalytic core of 3 subunits MT-CO1, MT-CO2 and MT-CO3, encoded in the mitochondrial DNA, and 11 supernumerary subunits COX4I, COX5A, COX5B, COX6A, COX6B, COX6C, COX7A, COX7B, COX7C, COX8 and NDUFA4, which are encoded in the nuclear genome. The complex exists as a monomer or a dimer and forms supercomplexes (SCs) in the inner mitochondrial membrane with NADH-ubiquinone oxidoreductase (complex I, CI) and ubiquinol-cytochrome c oxidoreductase (cytochrome b-c1 complex, complex III, CIII), resulting in different assemblies (supercomplex SCI(1)III(2)IV(1) and megacomplex MCI(2)III(2)IV(2)). Interacts with PHB2; the interaction decreases in absence of SPHK2. Interacts with AFG1L. Interacts with ABCB7; this interaction allows the regulation of cellular iron homeostasis and cellular reactive oxygen species (ROS) levels in cardiomyocytes. Interacts with FLVCR2; this interaction occurs in the absence of heme and is disrupted upon heme binding. Interacts with IRGC.

The protein localises to the mitochondrion inner membrane. Its pathway is energy metabolism; oxidative phosphorylation. In terms of biological role, component of the cytochrome c oxidase, the last enzyme in the mitochondrial electron transport chain which drives oxidative phosphorylation. The respiratory chain contains 3 multisubunit complexes succinate dehydrogenase (complex II, CII), ubiquinol-cytochrome c oxidoreductase (cytochrome b-c1 complex, complex III, CIII) and cytochrome c oxidase (complex IV, CIV), that cooperate to transfer electrons derived from NADH and succinate to molecular oxygen, creating an electrochemical gradient over the inner membrane that drives transmembrane transport and the ATP synthase. Cytochrome c oxidase is the component of the respiratory chain that catalyzes the reduction of oxygen to water. Electrons originating from reduced cytochrome c in the intermembrane space (IMS) are transferred via the dinuclear copper A center (CU(A)) of subunit 2 and heme A of subunit 1 to the active site in subunit 1, a binuclear center (BNC) formed by heme A3 and copper B (CU(B)). The BNC reduces molecular oxygen to 2 water molecules using 4 electrons from cytochrome c in the IMS and 4 protons from the mitochondrial matrix. This Pongo pygmaeus (Bornean orangutan) protein is Cytochrome c oxidase subunit 4 isoform 1, mitochondrial (COX4I1).